The following is a 623-amino-acid chain: Kelch repeat and BTB domain-containing protein 12 (623 aa).

Residues 25 to 92 (TDVVLVAEGV…MYSSNLPLTA (68 aa)) enclose the BTB domain. The region spanning 127-236 (CLGIYYYARD…GVDYLKGTMK (110 aa)) is the BACK domain. Kelch repeat units follow at residues 390–440 (NLYL…RMKG), 441–496 (RLYV…ALNG), 498–551 (IYVL…ASNA), and 557–607 (KLYV…LVAN).

The polypeptide is Kelch repeat and BTB domain-containing protein 12 (kbtbd12) (Danio rerio (Zebrafish)).